Consider the following 621-residue polypeptide: Chaperone protein HtpG (621 aa).

Residues 1-328 (MKQEKKKFDA…SEDLPLNISR (328 aa)) form an a; substrate-binding region. The b stretch occupies residues 329–544 (ESLQHNNVLE…EAAMDIRMER (216 aa)). Residues 478-498 (DVDQATSSSEEKNKDDKKSDD) form a disordered region. Over residues 486 to 498 (SEEKNKDDKKSDD) the composition is skewed to basic and acidic residues. The tract at residues 545 to 621 (FLIEQKQIAN…LNDIVQKAIL (77 aa)) is c.

The protein belongs to the heat shock protein 90 family. In terms of assembly, homodimer.

It localises to the cytoplasm. Molecular chaperone. Has ATPase activity. The protein is Chaperone protein HtpG of Rickettsia bellii (strain RML369-C).